Here is an 81-residue protein sequence, read N- to C-terminus: Small ribosomal subunit protein bS16 (81 aa).

The protein belongs to the bacterial ribosomal protein bS16 family.

The protein is Small ribosomal subunit protein bS16 of Coprothermobacter proteolyticus (strain ATCC 35245 / DSM 5265 / OCM 4 / BT).